Here is a 588-residue protein sequence, read N- to C-terminus: A-type ATP synthase subunit A 3 (588 aa).

234–241 contacts ATP; the sequence is GPFGSGKT.

It belongs to the ATPase alpha/beta chains family. In terms of assembly, has multiple subunits with at least A(3), B(3), C, D, E, F, H, I and proteolipid K(x).

The protein localises to the cell membrane. The enzyme catalyses ATP + H2O + 4 H(+)(in) = ADP + phosphate + 5 H(+)(out). Its function is as follows. Component of the A-type ATP synthase that produces ATP from ADP in the presence of a proton gradient across the membrane. The A chain is the catalytic subunit. This is A-type ATP synthase subunit A 3 from Methanospirillum hungatei JF-1 (strain ATCC 27890 / DSM 864 / NBRC 100397 / JF-1).